Here is a 22-residue protein sequence, read N- to C-terminus: IILELAAVDSASGKLLINGNFK.

This is Unknown protein from spot 168 of 2D-PAGE of etiolated coleoptile from Zea mays (Maize).